A 509-amino-acid polypeptide reads, in one-letter code: Acetyl-coenzyme A carboxylase carboxyl transferase subunit beta, chloroplastic (509 aa).

A disordered region spans residues 164-216 (HGSVCDGESHNSSEGESSSRRTHTKGVDLTIRESSNENERESSNENERKSSND). 2 stretches are compositionally biased toward basic and acidic residues: residues 170-182 (GESH…ESSS) and 193-216 (TIRE…SSND). The CoA carboxyltransferase N-terminal domain maps to 226–509 (LWLQCENCYG…LNQNSNQVEC (284 aa)). Positions 230, 233, 249, and 252 each coordinate Zn(2+). The C4-type zinc-finger motif lies at 230–252 (CENCYGLNYKKFLKSKMNICEQC). The tract at residues 288–307 (FDSEGEQEQEQEQEQEEEET) is disordered.

Belongs to the AccD/PCCB family. In terms of assembly, acetyl-CoA carboxylase is a heterohexamer composed of biotin carboxyl carrier protein, biotin carboxylase and 2 subunits each of ACCase subunit alpha and ACCase plastid-coded subunit beta (accD). Requires Zn(2+) as cofactor.

The protein resides in the plastid. It is found in the chloroplast stroma. The catalysed reaction is N(6)-carboxybiotinyl-L-lysyl-[protein] + acetyl-CoA = N(6)-biotinyl-L-lysyl-[protein] + malonyl-CoA. It participates in lipid metabolism; malonyl-CoA biosynthesis; malonyl-CoA from acetyl-CoA: step 1/1. Component of the acetyl coenzyme A carboxylase (ACC) complex. Biotin carboxylase (BC) catalyzes the carboxylation of biotin on its carrier protein (BCCP) and then the CO(2) group is transferred by the transcarboxylase to acetyl-CoA to form malonyl-CoA. The protein is Acetyl-coenzyme A carboxylase carboxyl transferase subunit beta, chloroplastic of Ipomoea purpurea (Common morning glory).